We begin with the raw amino-acid sequence, 433 residues long: Phosphoglycerate kinase, chloroplastic (433 aa).

A chloroplast-targeting transit peptide spans 1–28 (GASFSLHVLSKINSYKSQSTKPIRGVAS). Residues alanine 51, aspartate 52, asparagine 54, arginine 68, serine 90, histidine 91, glycine 93, arginine 94, arginine 149, histidine 181, and arginine 182 each contribute to the (2R)-3-phosphoglycerate site. Glycine 227 is an ADP binding site. Residue glycine 227 coordinates CDP. 2 residues coordinate AMP: lysine 229 and lysine 233. Lysine 233 contacts ATP. Glycine 251 lines the ADP pocket. Glycine 251 is a CDP binding site. Glycine 252 and glycine 324 together coordinate AMP. 2 residues coordinate ATP: glycine 252 and glycine 324. Residues glycine 349 and phenylalanine 354 each contribute to the CDP site. ADP is bound at residue phenylalanine 354. Glutamate 355 contributes to the AMP binding site. ATP is bound by residues glutamate 355, aspartate 386, and serine 387. Position 386 (aspartate 386) interacts with Mg(2+).

The protein belongs to the phosphoglycerate kinase family. In terms of assembly, monomer. Mg(2+) serves as cofactor.

The protein resides in the plastid. The protein localises to the chloroplast. The catalysed reaction is (2R)-3-phosphoglycerate + ATP = (2R)-3-phospho-glyceroyl phosphate + ADP. The protein operates within carbohydrate biosynthesis; Calvin cycle. This chain is Phosphoglycerate kinase, chloroplastic, found in Spinacia oleracea (Spinach).